Reading from the N-terminus, the 248-residue chain is MTTTTIQFNALLLDIEGTITSISFVKDELFPYAFENVGNYLEEHYDNPATQIIVEDLRHIADQQAENDVAVVRIREPRKECIEDVTKNVRHWIKRDKKLTPMKALQGLIWEEAYQRGDVKGHVYPDVLPVLKIVENRKIPIYIYSSGSVHAQKLLFANSIEGDMTKILYGYFDTNIGLKGESNSYTKISERIKIPPSEILFLTDVEAEAAAAKKAGLQTKLVVRPGNAGLTQEAINAYGTIESLEEIL.

2 residues coordinate Mg(2+): Asp14 and Glu16. Substrate-binding positions include 145–146 and Lys179; that span reads SS. Residue Asp204 coordinates Mg(2+).

The protein belongs to the HAD-like hydrolase superfamily. MasA/MtnC family. As to quaternary structure, monomer. Requires Mg(2+) as cofactor.

Its subcellular location is the cytoplasm. It is found in the nucleus. It carries out the reaction 5-methylsulfanyl-2,3-dioxopentyl phosphate + H2O = 1,2-dihydroxy-5-(methylsulfanyl)pent-1-en-3-one + phosphate. It functions in the pathway amino-acid biosynthesis; L-methionine biosynthesis via salvage pathway; L-methionine from S-methyl-5-thio-alpha-D-ribose 1-phosphate: step 3/6. The protein operates within amino-acid biosynthesis; L-methionine biosynthesis via salvage pathway; L-methionine from S-methyl-5-thio-alpha-D-ribose 1-phosphate: step 4/6. In terms of biological role, bifunctional enzyme that catalyzes the enolization of 2,3-diketo-5-methylthiopentyl-1-phosphate (DK-MTP-1-P) into the intermediate 2-hydroxy-3-keto-5-methylthiopentenyl-1-phosphate (HK-MTPenyl-1-P), which is then dephosphorylated to form the acireductone 1,2-dihydroxy-3-keto-5-methylthiopentene (DHK-MTPene). This Caenorhabditis elegans protein is Enolase-phosphatase E1.